The sequence spans 149 residues: D-aminoacyl-tRNA deacylase (149 aa).

Positions 137-138 (GP) match the Gly-cisPro motif, important for rejection of L-amino acids motif.

Belongs to the DTD family. As to quaternary structure, homodimer.

The protein resides in the cytoplasm. The enzyme catalyses glycyl-tRNA(Ala) + H2O = tRNA(Ala) + glycine + H(+). It carries out the reaction a D-aminoacyl-tRNA + H2O = a tRNA + a D-alpha-amino acid + H(+). Its function is as follows. An aminoacyl-tRNA editing enzyme that deacylates mischarged D-aminoacyl-tRNAs. Also deacylates mischarged glycyl-tRNA(Ala), protecting cells against glycine mischarging by AlaRS. Acts via tRNA-based rather than protein-based catalysis; rejects L-amino acids rather than detecting D-amino acids in the active site. By recycling D-aminoacyl-tRNA to D-amino acids and free tRNA molecules, this enzyme counteracts the toxicity associated with the formation of D-aminoacyl-tRNA entities in vivo and helps enforce protein L-homochirality. The protein is D-aminoacyl-tRNA deacylase of Clostridium botulinum (strain Eklund 17B / Type B).